A 692-amino-acid polypeptide reads, in one-letter code: Elongation factor G (692 aa).

Residues 8–282 (ENTRNIGIMA…GVVDYLPSPV (275 aa)) enclose the tr-type G domain. Residues 17–24 (AHIDAGKT), 81–85 (DTPGH), and 135–138 (NKMD) contribute to the GTP site.

This sequence belongs to the TRAFAC class translation factor GTPase superfamily. Classic translation factor GTPase family. EF-G/EF-2 subfamily.

It localises to the cytoplasm. In terms of biological role, catalyzes the GTP-dependent ribosomal translocation step during translation elongation. During this step, the ribosome changes from the pre-translocational (PRE) to the post-translocational (POST) state as the newly formed A-site-bound peptidyl-tRNA and P-site-bound deacylated tRNA move to the P and E sites, respectively. Catalyzes the coordinated movement of the two tRNA molecules, the mRNA and conformational changes in the ribosome. This Geobacillus sp. (strain WCH70) protein is Elongation factor G.